We begin with the raw amino-acid sequence, 293 residues long: Ribosomal RNA small subunit methyltransferase H (293 aa).

Residues 31–33 (GGY), D49, F76, D97, and Q104 each bind S-adenosyl-L-methionine.

This sequence belongs to the methyltransferase superfamily. RsmH family.

The protein resides in the cytoplasm. It catalyses the reaction cytidine(1402) in 16S rRNA + S-adenosyl-L-methionine = N(4)-methylcytidine(1402) in 16S rRNA + S-adenosyl-L-homocysteine + H(+). Specifically methylates the N4 position of cytidine in position 1402 (C1402) of 16S rRNA. The chain is Ribosomal RNA small subunit methyltransferase H from Wolbachia sp. subsp. Drosophila simulans (strain wRi).